Here is a 221-residue protein sequence, read N- to C-terminus: Phosphoribosylformylglycinamidine synthase subunit PurQ (221 aa).

The Glutamine amidotransferase type-1 domain maps to 3–221; that stretch reads AAVLVFPGSN…MFASLMQVMA (219 aa). Residue Cys87 is the Nucleophile of the active site. Active-site residues include His195 and Glu197.

Part of the FGAM synthase complex composed of 1 PurL, 1 PurQ and 2 PurS subunits.

It localises to the cytoplasm. It catalyses the reaction N(2)-formyl-N(1)-(5-phospho-beta-D-ribosyl)glycinamide + L-glutamine + ATP + H2O = 2-formamido-N(1)-(5-O-phospho-beta-D-ribosyl)acetamidine + L-glutamate + ADP + phosphate + H(+). It carries out the reaction L-glutamine + H2O = L-glutamate + NH4(+). It participates in purine metabolism; IMP biosynthesis via de novo pathway; 5-amino-1-(5-phospho-D-ribosyl)imidazole from N(2)-formyl-N(1)-(5-phospho-D-ribosyl)glycinamide: step 1/2. Part of the phosphoribosylformylglycinamidine synthase complex involved in the purines biosynthetic pathway. Catalyzes the ATP-dependent conversion of formylglycinamide ribonucleotide (FGAR) and glutamine to yield formylglycinamidine ribonucleotide (FGAM) and glutamate. The FGAM synthase complex is composed of three subunits. PurQ produces an ammonia molecule by converting glutamine to glutamate. PurL transfers the ammonia molecule to FGAR to form FGAM in an ATP-dependent manner. PurS interacts with PurQ and PurL and is thought to assist in the transfer of the ammonia molecule from PurQ to PurL. The protein is Phosphoribosylformylglycinamidine synthase subunit PurQ of Zymomonas mobilis subsp. mobilis (strain ATCC 31821 / ZM4 / CP4).